The following is a 263-amino-acid chain: 4-hydroxy-tetrahydrodipicolinate reductase (263 aa).

Residues 8–13 (GACGRM), Asp-34, 99–101 (GTT), and 125–128 (SPNY) each bind NAD(+). His-157 functions as the Proton donor/acceptor in the catalytic mechanism. Residue His-158 coordinates (S)-2,3,4,5-tetrahydrodipicolinate. Lys-161 acts as the Proton donor in catalysis. Residue 167–168 (GT) participates in (S)-2,3,4,5-tetrahydrodipicolinate binding.

The protein belongs to the DapB family.

The protein localises to the cytoplasm. It catalyses the reaction (S)-2,3,4,5-tetrahydrodipicolinate + NAD(+) + H2O = (2S,4S)-4-hydroxy-2,3,4,5-tetrahydrodipicolinate + NADH + H(+). It carries out the reaction (S)-2,3,4,5-tetrahydrodipicolinate + NADP(+) + H2O = (2S,4S)-4-hydroxy-2,3,4,5-tetrahydrodipicolinate + NADPH + H(+). It functions in the pathway amino-acid biosynthesis; L-lysine biosynthesis via DAP pathway; (S)-tetrahydrodipicolinate from L-aspartate: step 4/4. Catalyzes the conversion of 4-hydroxy-tetrahydrodipicolinate (HTPA) to tetrahydrodipicolinate. This Methanosarcina acetivorans (strain ATCC 35395 / DSM 2834 / JCM 12185 / C2A) protein is 4-hydroxy-tetrahydrodipicolinate reductase.